Here is a 198-residue protein sequence, read N- to C-terminus: Nucleoid occlusion factor SlmA (198 aa).

An HTH tetR-type domain is found at 9–70 (RNRREEILQS…SLIEFIEDSL (62 aa)). Positions 33–52 (TTAKLAASVGVSEAALYRHF) form a DNA-binding region, H-T-H motif. The stretch at 117–145 (EQDRLQGRINQLFERIEAQLRQVLREKKM) forms a coiled coil.

Belongs to the nucleoid occlusion factor SlmA family. Homodimer. Interacts with FtsZ.

Its subcellular location is the cytoplasm. The protein resides in the nucleoid. Required for nucleoid occlusion (NO) phenomenon, which prevents Z-ring formation and cell division over the nucleoid. Acts as a DNA-associated cell division inhibitor that binds simultaneously chromosomal DNA and FtsZ, and disrupts the assembly of FtsZ polymers. SlmA-DNA-binding sequences (SBS) are dispersed on non-Ter regions of the chromosome, preventing FtsZ polymerization at these regions. The protein is Nucleoid occlusion factor SlmA of Cronobacter sakazakii (strain ATCC BAA-894) (Enterobacter sakazakii).